The sequence spans 274 residues: 26S proteasome regulatory subunit RPN12 (274 aa).

The 176-residue stretch at 76–251 (DSFENYFNQL…KADYEDEMMH (176 aa)) folds into the PCI domain.

This sequence belongs to the proteasome subunit S14 family.

Its function is as follows. Acts as a regulatory subunit of the 26S proteasome which is involved in the ATP-dependent degradation of ubiquitinated proteins. Necessary for activation of the CDC28 kinase. This is 26S proteasome regulatory subunit RPN12 (RPN12) from Saccharomyces cerevisiae (strain ATCC 204508 / S288c) (Baker's yeast).